The following is a 208-amino-acid chain: Probable nicotinate-nucleotide adenylyltransferase (208 aa).

This sequence belongs to the NadD family.

It carries out the reaction nicotinate beta-D-ribonucleotide + ATP + H(+) = deamido-NAD(+) + diphosphate. The protein operates within cofactor biosynthesis; NAD(+) biosynthesis; deamido-NAD(+) from nicotinate D-ribonucleotide: step 1/1. In terms of biological role, catalyzes the reversible adenylation of nicotinate mononucleotide (NaMN) to nicotinic acid adenine dinucleotide (NaAD). The polypeptide is Probable nicotinate-nucleotide adenylyltransferase (Acidothermus cellulolyticus (strain ATCC 43068 / DSM 8971 / 11B)).